The following is a 1585-amino-acid chain: Sterol 3-beta-glucosyltransferase (1585 aa).

A compositionally biased stretch (pro residues) spans 1-18 (MSPPISPTPPPLQPPFPP). 3 disordered regions span residues 1-151 (MSPP…ESSF), 177-225 (PWEE…PTHT), and 249-279 (YQYATPETSSRRTSAAGSESSSEGEVPLPKG). 3 stretches are compositionally biased toward polar residues: residues 65 to 92 (DQATNSSNDSLIPSRQAPNQEETENAIT), 105 to 123 (DAQTVRFSSSSPASYSTHE), and 132 to 148 (PRTSSRAPNTASSQMAE). A compositionally biased stretch (acidic residues) spans 178–194 (WEEDDDSDDGEDDDEFI). Residues 255–273 (ETSSRRTSAAGSESSSEGE) show a composition bias toward low complexity. One can recognise a GRAM 1 domain in the interval 387-555 (ERLMEVFGLE…EAIVDVEKSP (169 aa)). Residues 438-530 (LLVKSGPLHK…WVKAIQKVMF (93 aa)) enclose the PH domain. 2 disordered regions span residues 625 to 645 (TSHATIKRHGTDSSAEKLGMA) and 666 to 852 (DGEP…GSES). The span at 670–689 (LEEHSQGPHHNDEDASHLPH) shows a compositional bias: basic and acidic residues. Composition is skewed to polar residues over residues 760 to 785 (TDSSTTVTESGPSLRSRTGRTKQASV), 806 to 817 (NKPSVVDSNSAE), and 827 to 840 (SWTSETSSGSQMVK). In terms of domain architecture, GRAM 2 spans 862–933 (RKFRTFFALS…RDLYGLKAQK (72 aa)). Residues Ser-1043, Arg-1044, Asp-1046, Ile-1358, His-1360, His-1373, Gly-1377, Thr-1378, Asp-1397, and Gln-1398 each coordinate UDP-alpha-D-glucose. A disordered region spans residues 1499 to 1552 (NRVRSRSRSRSRSSQGRFSPRRHTVDDDGWSVVSGGSRSRSGSASAVTSPERRP). Positions 1529 to 1545 (SVVSGGSRSRSGSASAV) are enriched in low complexity.

This sequence belongs to the glycosyltransferase 28 family.

Its subcellular location is the cytoplasm. It is found in the membrane. The catalysed reaction is a sterol + UDP-alpha-D-glucose = a sterol 3-beta-D-glucoside + UDP + H(+). The enzyme catalyses ergosterol + UDP-alpha-D-glucose = ergosteryl 3-beta-D-glucoside + UDP + H(+). In terms of biological role, sterol glycosyltransferase responsible for the glycosylation of ergosterol to form ergosterol-glucoside. This is Sterol 3-beta-glucosyltransferase from Cryptococcus neoformans var. neoformans serotype D (strain B-3501A) (Filobasidiella neoformans).